Here is a 305-residue protein sequence, read N- to C-terminus: UDP-3-O-acyl-N-acetylglucosamine deacetylase (305 aa).

3 residues coordinate Zn(2+): H79, H238, and D242. H265 (proton donor) is an active-site residue.

This sequence belongs to the LpxC family. Zn(2+) is required as a cofactor.

It carries out the reaction a UDP-3-O-[(3R)-3-hydroxyacyl]-N-acetyl-alpha-D-glucosamine + H2O = a UDP-3-O-[(3R)-3-hydroxyacyl]-alpha-D-glucosamine + acetate. It participates in glycolipid biosynthesis; lipid IV(A) biosynthesis; lipid IV(A) from (3R)-3-hydroxytetradecanoyl-[acyl-carrier-protein] and UDP-N-acetyl-alpha-D-glucosamine: step 2/6. In terms of biological role, catalyzes the hydrolysis of UDP-3-O-myristoyl-N-acetylglucosamine to form UDP-3-O-myristoylglucosamine and acetate, the committed step in lipid A biosynthesis. The sequence is that of UDP-3-O-acyl-N-acetylglucosamine deacetylase from Shigella boydii serotype 4 (strain Sb227).